Here is a 530-residue protein sequence, read N- to C-terminus: Arginine--tRNA ligase (530 aa).

A 'HIGH' region motif is present at residues 113–123 (ANPTGPLHIGH).

This sequence belongs to the class-I aminoacyl-tRNA synthetase family. Monomer.

The protein resides in the cytoplasm. It carries out the reaction tRNA(Arg) + L-arginine + ATP = L-arginyl-tRNA(Arg) + AMP + diphosphate. The chain is Arginine--tRNA ligase from Campylobacter jejuni subsp. jejuni serotype O:6 (strain 81116 / NCTC 11828).